Consider the following 476-residue polypeptide: Probable rhodanese domain-containing dual specificity protein phosphatase (476 aa).

The 159-residue stretch at 32 to 190 (IGSSKIIIDL…FQKDYSFMCN (159 aa)) folds into the Rhodanese domain. The 143-residue stretch at 208–350 (YPSEIIKDFL…LKDYQQHLTL (143 aa)) folds into the Tyrosine-protein phosphatase domain. Cys294 acts as the Phosphocysteine intermediate in catalysis. A compositionally biased stretch (low complexity) spans 425 to 436 (KTTTSSTTINNK). Residues 425-476 (KTTTSSTTINNKGQQQDKAQEEKDSIFSYADKQEKMTHPTLHSPIELPQSSL) are disordered. The span at 442–461 (KAQEEKDSIFSYADKQEKMT) shows a compositional bias: basic and acidic residues.

This sequence belongs to the protein-tyrosine phosphatase family. Non-receptor class dual specificity subfamily.

It carries out the reaction O-phospho-L-tyrosyl-[protein] + H2O = L-tyrosyl-[protein] + phosphate. The enzyme catalyses O-phospho-L-seryl-[protein] + H2O = L-seryl-[protein] + phosphate. It catalyses the reaction O-phospho-L-threonyl-[protein] + H2O = L-threonyl-[protein] + phosphate. Has a dual specificity toward Ser/Thr and Tyr-containing proteins. The chain is Probable rhodanese domain-containing dual specificity protein phosphatase from Dictyostelium discoideum (Social amoeba).